A 347-amino-acid chain; its full sequence is MTKKIKIGNLYIGGGEPIRIQSMTNTKTKDIEKTVEQILRLESLGCEIIRVAVPDMESAKAIEKIKAKIHIPIVADIHFDYKLALEAIYNGADKIRINPGNIGGPEKVKKIVDEAKRYGIPIRVGANSGSLPKEILEKYKSPTPEAIVEAALNQVRLLESFDFDNIVISVKSSDILTTIKSYEILSRRTSYPLHVGLTEAGTFIAGCVKSSIAIGHLLLQGIGDTIRVSLTDDPEKEVTVAKEILKGLKLKKGVNIISCPTCARCNVDLIKIANEVEKRIGNLDLDISVAIMGCAVNGPGEAKEADIGIACGIGEGLLFKKGKIVKKVKEDDLVDELIREIYSLYKT.

[4Fe-4S] cluster-binding residues include Cys259, Cys262, Cys294, and Glu301.

The protein belongs to the IspG family. [4Fe-4S] cluster is required as a cofactor.

It catalyses the reaction (2E)-4-hydroxy-3-methylbut-2-enyl diphosphate + oxidized [flavodoxin] + H2O + 2 H(+) = 2-C-methyl-D-erythritol 2,4-cyclic diphosphate + reduced [flavodoxin]. The protein operates within isoprenoid biosynthesis; isopentenyl diphosphate biosynthesis via DXP pathway; isopentenyl diphosphate from 1-deoxy-D-xylulose 5-phosphate: step 5/6. Its function is as follows. Converts 2C-methyl-D-erythritol 2,4-cyclodiphosphate (ME-2,4cPP) into 1-hydroxy-2-methyl-2-(E)-butenyl 4-diphosphate. The chain is 4-hydroxy-3-methylbut-2-en-1-yl diphosphate synthase (flavodoxin) from Caldicellulosiruptor saccharolyticus (strain ATCC 43494 / DSM 8903 / Tp8T 6331).